Reading from the N-terminus, the 353-residue chain is Tsukushi (353 aa).

The first 17 residues, Met-1–Thr-17, serve as a signal peptide directing secretion. Residues Thr-18–Leu-59 enclose the LRRNT domain. 10 LRR repeats span residues Asp-60 to Gly-80, Thr-86 to Arg-107, Tyr-110 to Ser-131, Pro-133 to Thr-154, Ala-160 to Ala-180, Thr-186 to Pro-207, Leu-208 to Gly-228, Gly-231 to Glu-253, Gly-256 to Ser-277, and Leu-281 to His-302. A glycan (N-linked (GlcNAc...) asparagine) is linked at Asn-75. Residue Asn-138 is glycosylated (N-linked (GlcNAc...) asparagine). A glycan (N-linked (GlcNAc...) asparagine) is linked at Asn-191.

In terms of assembly, interacts with FZD4 (via FZ domain); competes with WNT2B for binding to FZD4, inhibiting Wnt signaling and repressing peripheral eye development. Interacts with TGFB1; the interaction contributes to regulation of the hair cycle. Interacts with netrin. Interacts with CCN2. As to expression, expressed at high levels in the liver, small intestine and placenta. Not or barely detectable in other tissues, including whole pancreas, adipose tissues, skeletal muscle, kidney, spleen, brain, lung and testis.

It is found in the secreted. Functionally, contributes to various developmental events and other processes such as wound healing and cholesterol homeostasis through its interactions with multiple signaling pathways. Wnt signaling inhibitor which competes with WNT2B for binding to Wnt receptor FZD4 and represses WNT2B-dependent development of the peripheral eye. Plays a role in regulating the hair cycle by controlling TGFB1 signaling. Required for the development of the anterior commissure in the brain by inhibiting neurite outgrowth. Essential for terminal differentiation of hippocampal neural stem cells. Plays a role in regulating bone elongation and bone mass by modulating growth plate chondrocyte function and overall body size. Required for development of the inner ear through its involvement in stereocilia formation in inner hair cells. Facilitates wound healing by inhibiting secretion of TGFB1 from macrophages which prevents myofibroblast differentiation, maintaining inflammatory cell quiescence. Plays a role in cholesterol homeostasis by reducing circulating high-density lipoprotein cholesterol, lowering cholesterol efflux capacity and decreasing cholesterol-to-bile acid conversion in the liver. In one study, shown to negatively regulate sympathetic innervation in brown fat, leading to reduced energy expenditure. In another study, shown not to affect brown fat thermogenic capacity, body weight gain or glucose homeostasis. The polypeptide is Tsukushi (Tsku) (Rattus norvegicus (Rat)).